The following is a 266-amino-acid chain: Phosphate import ATP-binding protein PstB 1 (266 aa).

The region spanning 21-261 (ISTQDLSVFY…PKGEITEDYI (241 aa)) is the ABC transporter domain. ATP is bound at residue 54–61 (GGSGSGKS).

This sequence belongs to the ABC transporter superfamily. Phosphate importer (TC 3.A.1.7) family. In terms of assembly, the complex is composed of two ATP-binding proteins (PstB), two transmembrane proteins (PstC and PstA) and a solute-binding protein (PstS).

The protein localises to the cell membrane. It carries out the reaction phosphate(out) + ATP + H2O = ADP + 2 phosphate(in) + H(+). Part of the ABC transporter complex PstSACB involved in phosphate import. Responsible for energy coupling to the transport system. In Lactobacillus johnsonii (strain CNCM I-12250 / La1 / NCC 533), this protein is Phosphate import ATP-binding protein PstB 1.